The primary structure comprises 166 residues: Phosphopantetheine adenylyltransferase (166 aa).

Ser11 contacts substrate. ATP is bound by residues 11-12 (SF) and His19. Residues Lys43, Val80, and Arg94 each contribute to the substrate site. Residues 95 to 97 (GLR), Glu105, and 130 to 136 (VRTVTAT) contribute to the ATP site.

The protein belongs to the bacterial CoaD family. In terms of assembly, homohexamer. Mg(2+) serves as cofactor.

The protein localises to the cytoplasm. The enzyme catalyses (R)-4'-phosphopantetheine + ATP + H(+) = 3'-dephospho-CoA + diphosphate. The protein operates within cofactor biosynthesis; coenzyme A biosynthesis; CoA from (R)-pantothenate: step 4/5. Its function is as follows. Reversibly transfers an adenylyl group from ATP to 4'-phosphopantetheine, yielding dephospho-CoA (dPCoA) and pyrophosphate. This Chelativorans sp. (strain BNC1) protein is Phosphopantetheine adenylyltransferase.